The primary structure comprises 729 residues: Fatty acid oxidation complex subunit alpha (729 aa).

The interval 1 to 189 (MLYKGDTLYL…KIGLVDGVVK (189 aa)) is enoyl-CoA hydratase/isomerase. Asp-296 lines the substrate pocket. The segment at 311–729 (ETPKQAAVLG…ARPVGDLKTA (419 aa)) is 3-hydroxyacyl-CoA dehydrogenase. NAD(+)-binding positions include Met-324, Asp-343, 400-402 (VVE), Lys-407, and Ser-429. His-450 (for 3-hydroxyacyl-CoA dehydrogenase activity) is an active-site residue. Asn-453 lines the NAD(+) pocket. Substrate contacts are provided by Asn-500 and Tyr-660. The tract at residues 708-729 (RHNEPYYPPVEPARPVGDLKTA) is disordered.

The protein in the N-terminal section; belongs to the enoyl-CoA hydratase/isomerase family. This sequence in the C-terminal section; belongs to the 3-hydroxyacyl-CoA dehydrogenase family. Heterotetramer of two alpha chains (FadB) and two beta chains (FadA).

The catalysed reaction is a (3S)-3-hydroxyacyl-CoA + NAD(+) = a 3-oxoacyl-CoA + NADH + H(+). It carries out the reaction a (3S)-3-hydroxyacyl-CoA = a (2E)-enoyl-CoA + H2O. The enzyme catalyses a 4-saturated-(3S)-3-hydroxyacyl-CoA = a (3E)-enoyl-CoA + H2O. It catalyses the reaction (3S)-3-hydroxybutanoyl-CoA = (3R)-3-hydroxybutanoyl-CoA. The catalysed reaction is a (3Z)-enoyl-CoA = a 4-saturated (2E)-enoyl-CoA. It carries out the reaction a (3E)-enoyl-CoA = a 4-saturated (2E)-enoyl-CoA. The protein operates within lipid metabolism; fatty acid beta-oxidation. Involved in the aerobic and anaerobic degradation of long-chain fatty acids via beta-oxidation cycle. Catalyzes the formation of 3-oxoacyl-CoA from enoyl-CoA via L-3-hydroxyacyl-CoA. It can also use D-3-hydroxyacyl-CoA and cis-3-enoyl-CoA as substrate. The polypeptide is Fatty acid oxidation complex subunit alpha (Escherichia coli O7:K1 (strain IAI39 / ExPEC)).